Here is an 85-residue protein sequence, read N- to C-terminus: Sec-independent protein translocase protein TatA (85 aa).

The helical transmembrane segment at 1 to 21 (MGGISIWQLLIIALIVVLLFG) threads the bilayer. Residues 43–85 (MSSDEDKKALEDAEAAKSVQTAQTAQPTQQATEKKPESNKEQA) are disordered. Over residues 46–57 (DEDKKALEDAEA) the composition is skewed to basic and acidic residues. Low complexity predominate over residues 58–73 (AKSVQTAQTAQPTQQA). A compositionally biased stretch (basic and acidic residues) spans 74–85 (TEKKPESNKEQA).

The protein belongs to the TatA/E family. As to quaternary structure, the Tat system comprises two distinct complexes: a TatABC complex, containing multiple copies of TatA, TatB and TatC subunits, and a separate TatA complex, containing only TatA subunits. Substrates initially bind to the TatABC complex, which probably triggers association of the separate TatA complex to form the active translocon.

Its subcellular location is the cell inner membrane. Its function is as follows. Part of the twin-arginine translocation (Tat) system that transports large folded proteins containing a characteristic twin-arginine motif in their signal peptide across membranes. TatA could form the protein-conducting channel of the Tat system. This Shewanella sp. (strain ANA-3) protein is Sec-independent protein translocase protein TatA.